Here is a 372-residue protein sequence, read N- to C-terminus: Dof zinc finger protein DOF5.6 (372 aa).

The segment at 73–127 (QKCPRCESTHTKFCYYNNYSLSQPRYFCKTCRRYWTKGGTLRNIPVGGGCRKNKK) adopts a Dof-type zinc-finger fold. Zn(2+) is bound by residues Cys-75, Cys-78, Cys-100, and Cys-103. A disordered region spans residues 117–146 (PVGGGCRKNKKPSSSNSSSSTSSGKKPSNI). The segment covering 128–145 (PSSSNSSSSTSSGKKPSN) has biased composition (low complexity).

In terms of tissue distribution, the PEAR proteins (e.g. DOF2.4, DOF5.1, DOF3.2, DOF1.1, DOF5.6 and DOF5.3) form a short-range concentration gradient that peaks at protophloem sieve elements (PSE). Preferentially expressed in the vasculature of all organs, including seedlings, roots, stems, buds, leaves, flowers and siliques, and particularly in the cambium, phloem and interfascicular parenchyma cells of inflorescence stems.

Its subcellular location is the nucleus. In terms of biological role, transcription factor that binds specifically to a 5'-AA[AG]G-3' consensus core sequence. Promotes expression. The PEAR proteins (e.g. DOF2.4, DOF5.1, DOF3.2, DOF1.1, DOF5.6 and DOF5.3) activate gene expression that promotes radial growth of protophloem sieve elements. Involved in the regulation of interfascicular cambium formation and vascular tissue development, particularly at a very early stage during inflorescence stem development; promotes both cambium activity and phloem specification, but prevents xylem specification. The chain is Dof zinc finger protein DOF5.6 from Arabidopsis thaliana (Mouse-ear cress).